A 399-amino-acid polypeptide reads, in one-letter code: CLOCK-interacting pacemaker (399 aa).

The segment covering 1–12 (MERKNSSRESPR) has biased composition (basic and acidic residues). 2 disordered regions span residues 1–85 (MERK…AKNA) and 159–224 (SYTK…KLAE). Position 213 is a phosphoserine (S213). A coiled-coil region spans residues 333–359 (TLKTKELIRQNQATQVELDQLKEQTQL). Residues 378–388 (SLTPGSSNTGS) are compositionally biased toward polar residues. The interval 378 to 399 (SLTPGSSNTGSDLEAFSDHPDI) is disordered.

Interacts with CLOCK. Forms a ternary complex with the CLOCK-BMAL1 heterodimer. Interacts with CAD and HSPA5.

It is found in the nucleus. The protein localises to the cytoplasm. The protein resides in the cytosol. Functionally, transcriptional repressor which may act as a negative-feedback regulator of CLOCK-BMAL1 transcriptional activity in the circadian-clock mechanism. May stimulate BMAL1-dependent phosphorylation of CLOCK. However, the physiological relevance of these observations is unsure, since experiments in knockout mice showed that CIPC is not critially required for basic circadian clock. The chain is CLOCK-interacting pacemaker (CIPC) from Pongo abelii (Sumatran orangutan).